Reading from the N-terminus, the 527-residue chain is Exodeoxyribonuclease 7 large subunit (527 aa).

A disordered region spans residues 499-527 (AGEEGAPPPAAPKKRASRPVVPTKQGSLF).

The protein belongs to the XseA family. In terms of assembly, heterooligomer composed of large and small subunits.

Its subcellular location is the cytoplasm. It carries out the reaction Exonucleolytic cleavage in either 5'- to 3'- or 3'- to 5'-direction to yield nucleoside 5'-phosphates.. In terms of biological role, bidirectionally degrades single-stranded DNA into large acid-insoluble oligonucleotides, which are then degraded further into small acid-soluble oligonucleotides. This is Exodeoxyribonuclease 7 large subunit from Sinorhizobium fredii (strain NBRC 101917 / NGR234).